Here is a 261-residue protein sequence, read N- to C-terminus: MAVGKNKRISKGKKGGKKKAADPYAKKDWYDIKAPSVFDIKNVGKTLVTRTQGTKIASEGLKHRVFEVSLADLQKDEDQSFRKIRLRAEDVQGKNVLTNFWGMDFTTDKLRSLVKKWQTLIEAHVDVKTTDSYTLRMFCIAFTKKRPNQQKRTCYAQSSQIRQIRRKMVEIMRNQASSCDLKELVAKFIPESIGREIEKATSSIFPLQNVYIRKVKILKAPKFDIGKLMEVHGDYSEDVGVKLDRPADETVAEAEPEIPGA.

A compositionally biased stretch (basic residues) spans 1 to 18 (MAVGKNKRISKGKKGGKK). The segment at 1–23 (MAVGKNKRISKGKKGGKKKAADP) is disordered.

Belongs to the eukaryotic ribosomal protein eS1 family. In terms of assembly, component of the small ribosomal subunit. Mature ribosomes consist of a small (40S) and a large (60S) subunit. The 40S subunit contains about 33 different proteins and 1 molecule of RNA (18S). The 60S subunit contains about 49 different proteins and 3 molecules of RNA (25S, 5.8S and 5S).

The protein localises to the cytoplasm. The chain is Small ribosomal subunit protein eS1 (cyc07) from Nicotiana tabacum (Common tobacco).